We begin with the raw amino-acid sequence, 684 residues long: Kelch repeat and BTB domain-containing protein 7 (684 aa).

The disordered stretch occupies residues methionine 1 to lysine 27. Over residues serine 10–serine 26 the composition is skewed to basic residues. Position 29 is a phosphoserine (serine 29). The 76-residue stretch at cysteine 63–glutamate 138 folds into the BTB domain. 5 Kelch repeats span residues alanine 386–glycine 435, tyrosine 436–asparagine 484, leucine 486–aspartate 523, glutamate 524–histidine 564, and lysine 567–alanine 616. The disordered stretch occupies residues isoleucine 630 to glutamate 666. A compositionally biased stretch (acidic residues) spans threonine 631–serine 654. The ATG8 interaction motif (AIM) motif lies at tryptophan 668 to valine 671.

As to quaternary structure, core component of a BCR3 (BTB-CUL3-RBX1) E3 ubiquitin ligase complex, also named Cul3-RING ubiquitin ligase complex CUL3(KBTBD6/7), composed of CUL3, RBX1, KBTBD6 and KBTBD7. Interacts with GABARAP; the interaction is direct and is required for the ubiquitination of TIAM1. Interacts with GABARAPL1, GABARAPL2 and MAP1LC3B; the interaction is direct.

Its subcellular location is the cytoplasm. It is found in the nucleus. The protein operates within protein modification; protein ubiquitination. Its function is as follows. As part of the CUL3(KBTBD6/7) E3 ubiquitin ligase complex functions as a substrate adapter for the RAC1 guanine exchange factor (GEF) TIAM1, mediating its 'Lys-48' ubiquitination and proteasomal degradation. By controlling this ubiquitination, regulates RAC1 signal transduction and downstream biological processes including the organization of the cytoskeleton, cell migration and cell proliferation. Ubiquitination of TIAM1 requires the membrane-associated protein GABARAP which may restrict locally the activity of the complex. The polypeptide is Kelch repeat and BTB domain-containing protein 7 (Homo sapiens (Human)).